The primary structure comprises 209 residues: MTDQGIVKINASLRENVGTGPARAVRRNGGIPAVVYGKNRDSLSVFLSDREFLSKHRSAALSTHLIELEIGDKKEYVLMRDVQKHPVTDRIQHVDFQFIDYGTEIKIEVPLIFTNEQKCIGVKRGGVLNILHRTLSIKCLPNAILQNIEIDLSDLTAGHSIHVSDLNLPPEINVVMKEHNPAIVTISSTSMEKEGEGSQEPTAAPSSEN.

Residues 188–209 (STSMEKEGEGSQEPTAAPSSEN) form a disordered region. Polar residues predominate over residues 199-209 (QEPTAAPSSEN).

It belongs to the bacterial ribosomal protein bL25 family. CTC subfamily. Part of the 50S ribosomal subunit; part of the 5S rRNA/L5/L18/L25 subcomplex. Contacts the 5S rRNA. Binds to the 5S rRNA independently of L5 and L18.

Its function is as follows. This is one of the proteins that binds to the 5S RNA in the ribosome where it forms part of the central protuberance. This is Large ribosomal subunit protein bL25 from Ehrlichia canis (strain Jake).